Consider the following 235-residue polypeptide: Orotidine 5'-phosphate decarboxylase (235 aa).

Residues Asp-10, Lys-33, 60 to 69 (DLKMHDIPNT), Thr-123, Arg-185, Gln-194, Gly-214, and Arg-215 contribute to the substrate site. Residue Lys-62 is the Proton donor of the active site.

Belongs to the OMP decarboxylase family. Type 1 subfamily. In terms of assembly, homodimer.

It carries out the reaction orotidine 5'-phosphate + H(+) = UMP + CO2. It participates in pyrimidine metabolism; UMP biosynthesis via de novo pathway; UMP from orotate: step 2/2. In terms of biological role, catalyzes the decarboxylation of orotidine 5'-monophosphate (OMP) to uridine 5'-monophosphate (UMP). The polypeptide is Orotidine 5'-phosphate decarboxylase (Lactobacillus acidophilus (strain ATCC 700396 / NCK56 / N2 / NCFM)).